The chain runs to 143 residues: Transcriptional regulator SlyA (143 aa).

In terms of domain architecture, HTH marR-type spans 2–135; that stretch reads ESTLGSDLAR…LSTLVQKLEQ (134 aa). Positions 49–72 form a DNA-binding region, H-T-H motif; it reads QIQLAKAIGIEQPSLVRTLDQLEE.

It belongs to the SlyA family. In terms of assembly, homodimer.

Transcription regulator that can specifically activate or repress expression of target genes. Regulates the cpm operon, which contains cpmA, cpmB, cpmC, cpmD, cpmE, cpmF, cpmG and cpmH, involved in carbapenem-like antibiotic production. The polypeptide is Transcriptional regulator SlyA (Photorhabdus laumondii subsp. laumondii (strain DSM 15139 / CIP 105565 / TT01) (Photorhabdus luminescens subsp. laumondii)).